Here is a 277-residue protein sequence, read N- to C-terminus: Phosphoenolpyruvate synthase regulatory protein (277 aa).

157 to 164 (GVSRCGKT) contacts ADP.

It belongs to the pyruvate, phosphate/water dikinase regulatory protein family. PSRP subfamily.

The catalysed reaction is [pyruvate, water dikinase] + ADP = [pyruvate, water dikinase]-phosphate + AMP + H(+). It catalyses the reaction [pyruvate, water dikinase]-phosphate + phosphate + H(+) = [pyruvate, water dikinase] + diphosphate. Its function is as follows. Bifunctional serine/threonine kinase and phosphorylase involved in the regulation of the phosphoenolpyruvate synthase (PEPS) by catalyzing its phosphorylation/dephosphorylation. This Escherichia coli O6:K15:H31 (strain 536 / UPEC) protein is Phosphoenolpyruvate synthase regulatory protein.